Here is a 407-residue protein sequence, read N- to C-terminus: Peptidase T (407 aa).

Position 81 (histidine 81) interacts with Zn(2+). Residue aspartate 83 is part of the active site. Residue aspartate 142 coordinates Zn(2+). The Proton acceptor role is filled by glutamate 176. Zn(2+)-binding residues include glutamate 177, aspartate 199, and histidine 381.

It belongs to the peptidase M20B family. Zn(2+) serves as cofactor.

It is found in the cytoplasm. The enzyme catalyses Release of the N-terminal residue from a tripeptide.. Cleaves the N-terminal amino acid of tripeptides. This chain is Peptidase T, found in Streptococcus pneumoniae (strain ATCC 700669 / Spain 23F-1).